The primary structure comprises 145 residues: Meiotically up-regulated gene 124 protein (145 aa).

Transmembrane regions (helical) follow at residues 18–38 (IILT…CPSI) and 95–115 (FAWS…NFFL).

The protein resides in the membrane. Its function is as follows. Has a role in meiosis. The polypeptide is Meiotically up-regulated gene 124 protein (mug124) (Schizosaccharomyces pombe (strain 972 / ATCC 24843) (Fission yeast)).